We begin with the raw amino-acid sequence, 376 residues long: MLSSAHLVPTSVQRAQSWICRSSRSFMDLKALLSSLNDFASLSFAESWDNVGLLVEPSPPHTVNTLFLTNDLTEEVMDEALQKKADFILSYHPPIFRPMKHITWKTWKECLVIRALENRVAVYSPHTAYDAAPQGVNSWLAKGLGTCTTRPIHPSRAPDYPTEGAHRLEFSVNRSQDLDKVMSTLRGVGGVSVTSFPARCDGEEQTRISLNCTQKTLMQVLAFLSQDRQLYQKTEILSLEKPLLLHTGMGRLCTLDESVSLAIMIERIKTHLKLSHLRLALGVGRTLESQVKVVALCAGSGGSVLQGVEADLYLTGEMSHHDVLDAASKGINVILCEHSNTERGFLSELQEMLGVHFENKINIILSETDRDPLRVV.

N6-acetyllysine is present on lysine 108. The mediates interaction with COPS2 stretch occupies residues 243–376 (LLLHTGMGRL…ETDRDPLRVV (134 aa)). A Phosphothreonine modification is found at threonine 254. At serine 258 the chain carries Phosphoserine.

The protein belongs to the GTP cyclohydrolase I type 2/NIF3 family. Homodimer. Interacts with COPS2. Interacts with THOC7. In terms of tissue distribution, ubiquitous. Detected in all tissues tested with higher expression in cerebellum, heart and kidney and to a lower level in cerebrum, lung, liver, spleen and muscle.

Its subcellular location is the cytoplasm. The protein resides in the nucleus. In terms of biological role, may function as a transcriptional corepressor through its interaction with COPS2, negatively regulating the expression of genes involved in neuronal differentiation. In Mus musculus (Mouse), this protein is NIF3-like protein 1.